The primary structure comprises 192 residues: 7-methyl-GTP pyrophosphatase (192 aa).

The active-site Proton acceptor is the aspartate 69.

It belongs to the Maf family. YceF subfamily. A divalent metal cation is required as a cofactor.

The protein resides in the cytoplasm. It catalyses the reaction N(7)-methyl-GTP + H2O = N(7)-methyl-GMP + diphosphate + H(+). Its function is as follows. Nucleoside triphosphate pyrophosphatase that hydrolyzes 7-methyl-GTP (m(7)GTP). May have a dual role in cell division arrest and in preventing the incorporation of modified nucleotides into cellular nucleic acids. In Pseudomonas syringae pv. syringae (strain B728a), this protein is 7-methyl-GTP pyrophosphatase.